Here is a 200-residue protein sequence, read N- to C-terminus: Holliday junction branch migration complex subunit RuvA (200 aa).

A domain I region spans residues 1 to 64; that stretch reads MIGHLRGIIV…EDAHTLYGFH (64 aa). Residues 65–143 are domain II; it reads NDHERRLFRA…RWHTNDTPSP (79 aa). The segment at 144-148 is flexible linker; that stretch reads EGLRS. The domain III stretch occupies residues 149–200; it reads SNTQPTQDAISALMALGYKPQEAKRAIDAIQKPDLSAETLIRLALKQMVLGT.

Belongs to the RuvA family. In terms of assembly, homotetramer. Forms an RuvA(8)-RuvB(12)-Holliday junction (HJ) complex. HJ DNA is sandwiched between 2 RuvA tetramers; dsDNA enters through RuvA and exits via RuvB. An RuvB hexamer assembles on each DNA strand where it exits the tetramer. Each RuvB hexamer is contacted by two RuvA subunits (via domain III) on 2 adjacent RuvB subunits; this complex drives branch migration. In the full resolvosome a probable DNA-RuvA(4)-RuvB(12)-RuvC(2) complex forms which resolves the HJ.

Its subcellular location is the cytoplasm. Functionally, the RuvA-RuvB-RuvC complex processes Holliday junction (HJ) DNA during genetic recombination and DNA repair, while the RuvA-RuvB complex plays an important role in the rescue of blocked DNA replication forks via replication fork reversal (RFR). RuvA specifically binds to HJ cruciform DNA, conferring on it an open structure. The RuvB hexamer acts as an ATP-dependent pump, pulling dsDNA into and through the RuvAB complex. HJ branch migration allows RuvC to scan DNA until it finds its consensus sequence, where it cleaves and resolves the cruciform DNA. The protein is Holliday junction branch migration complex subunit RuvA of Coxiella burnetii (strain CbuG_Q212) (Coxiella burnetii (strain Q212)).